Reading from the N-terminus, the 5634-residue chain is Hemicentin-1 (5634 aa).

An N-terminal signal peptide occupies residues 1–21 (MIAQEVVHTVFLVALFRSSLA). A VWFA domain is found at 41–216 (TLAFVFDVTG…EVLKWVEEAV (176 aa)). 29 Ig-like C2-type domains span residues 431 to 517 (PKVT…FDVS), 520 to 607 (PPII…VFLT), 612 to 697 (PKVT…STLR), 702 to 788 (PKLV…LTLD), 793 to 883 (PVFI…TTVT), 890 to 976 (PLIG…TSVA), 981 to 1067 (PSIQ…VQLT), 1072 to 1166 (PRVF…VKLS), 1171 to 1254 (PKIQ…AEVT), 1261 to 1353 (PSVE…YNLK), 1357 to 1446 (PPVI…FSVN), 1451 to 1540 (PSIL…IKLT), 1545 to 1633 (PSIK…FHVD), 1638 to 1723 (PTIE…REIK), 1732 to 1820 (PAVE…FEVT), 1825 to 1913 (PTIK…TQLH), 1918 to 2006 (PSLD…YSLQ), 2011 to 2096 (PSIS…RDID), 2103 to 2189 (PNIM…YNVN), 2194 to 2284 (PSIY…YNLQ), 2289 to 2378 (PSIT…YDLS), 2383 to 2472 (PSII…FGLS), 2477 to 2565 (PHIV…FRLN), 2570 to 2661 (PTIA…YEVK), 2665 to 2762 (PPII…VNIQ), 2765 to 2863 (PSFQ…YDVH), 2867 to 2958 (PPVI…FNLN), 2962 to 3050 (PPSV…VSLT), and 3055 to 3145 (PSIK…FHLN). 2 disulfide bridges follow: cysteine 451–cysteine 499 and cysteine 541–cysteine 591. Threonine 615 carries an O-linked (GalNAc...) threonine glycan. 11 cysteine pairs are disulfide-bonded: cysteine 633/cysteine 681, cysteine 723/cysteine 772, cysteine 814/cysteine 867, cysteine 911/cysteine 960, cysteine 1002/cysteine 1051, cysteine 1101/cysteine 1150, cysteine 1192/cysteine 1240, cysteine 1287/cysteine 1337, cysteine 1381/cysteine 1430, cysteine 1474/cysteine 1524, and cysteine 1568/cysteine 1617. 2 O-linked (GalNAc...) threonine glycosylation sites follow: threonine 1292 and threonine 1386. Threonine 1639 is a glycosylation site (O-linked (GalNAc...) threonine). Intrachain disulfides connect cysteine 1662-cysteine 1711 and cysteine 1755-cysteine 1804. O-linked (GalNAc...) threonine glycosylation is present at threonine 1826. 14 disulfides stabilise this stretch: cysteine 1847–cysteine 1897, cysteine 1941–cysteine 1990, cysteine 2032–cysteine 2082, cysteine 2124–cysteine 2173, cysteine 2217–cysteine 2268, cysteine 2313–cysteine 2362, cysteine 2407–cysteine 2456, cysteine 2500–cysteine 2549, cysteine 2596–cysteine 2645, cysteine 2695–cysteine 2744, cysteine 2798–cysteine 2847, cysteine 2893–cysteine 2942, cysteine 2985–cysteine 3034, and cysteine 3080–cysteine 3129. A glycan (O-linked (GalNAc...) threonine) is linked at threonine 3151. Ig-like C2-type domains lie at 3155–3227 (PETE…VASN), 3244–3334 (PSVA…FNLN), 3339–3428 (PKIR…YSLQ), 3433–3515 (PNMD…GEVS), 3526–3614 (PHIN…YLVR), 3619–3707 (PNIA…FNLT), 3712–3798 (PSIG…IDLQ), 3803–3891 (PSIA…VDLT), 3896–3982 (PTIA…VTLR), 3987–4073 (PVIQ…VKLN), 4077–4163 (PPVI…STLT), 4168–4252 (PRIQ…RIVT), 4259–4332 (PTFT…AENS), 4347–4434 (PPVF…MSLT), and 4439–4526 (PIIT…VIVQ). Cystine bridges form between cysteine 3172-cysteine 3223, cysteine 3267-cysteine 3318, cysteine 3363-cysteine 3412, cysteine 3456-cysteine 3505, cysteine 3549-cysteine 3598, cysteine 3642-cysteine 3691, cysteine 3733-cysteine 3782, and cysteine 3824-cysteine 3875. O-linked (GalNAc...) threonine glycosylation is present at threonine 3897. Intrachain disulfides connect cysteine 3917–cysteine 3966, cysteine 4008–cysteine 4057, cysteine 4099–cysteine 4147, cysteine 4189–cysteine 4238, cysteine 4280–cysteine 4327, cysteine 4370–cysteine 4418, cysteine 4460–cysteine 4508, cysteine 4540–cysteine 4577, cysteine 4544–cysteine 4582, cysteine 4555–cysteine 4567, cysteine 4597–cysteine 4634, cysteine 4601–cysteine 4639, cysteine 4612–cysteine 4624, cysteine 4654–cysteine 4691, cysteine 4658–cysteine 4696, cysteine 4669–cysteine 4681, cysteine 4711–cysteine 4748, cysteine 4715–cysteine 4753, cysteine 4726–cysteine 4738, cysteine 4768–cysteine 4805, cysteine 4772–cysteine 4810, cysteine 4783–cysteine 4795, cysteine 4825–cysteine 4862, cysteine 4829–cysteine 4867, and cysteine 4840–cysteine 4852. Residue threonine 4379 is glycosylated (O-linked (GalNAc...) threonine). TSP type-1 domains lie at 4528 to 4583 (HGGF…KLCP), 4585 to 4640 (DGHW…RPCP), 4642 to 4697 (HGVW…RHCP), 4699 to 4754 (DGRW…DPCP), 4756 to 4811 (HGNW…DMCP), and 4813 to 4868 (DGSW…QACP). In terms of domain architecture, Nidogen G2 beta-barrel spans 4870–5092 (GPQRARGSVI…SKGDRSNQCP (223 aa)). The EGF-like 1; calcium-binding domain maps to 5106–5145 (DEDECTAGNPCSHTCHNAIGAYYCSCPKGLTIAADGRTCQ). Disulfide bonds link cysteine 5110–cysteine 5120, cysteine 5116–cysteine 5129, and cysteine 5131–cysteine 5144. In terms of domain architecture, EGF-like 2; calcium-binding spans 5146 to 5189 (DIDECALGGHTCRAGQDCDNTIGSYRCVVHCGTGFRRTSDGLSC). Positions 5191-5228 (DINECQESSPCHQRCFNVIGSFHCGCEAGYQLKGRKCI) constitute an EGF-like 3; calcium-binding domain. 3 disulfides stabilise this stretch: cysteine 5195/cysteine 5205, cysteine 5201/cysteine 5214, and cysteine 5216/cysteine 5227. The EGF-like 4; calcium-binding domain occupies 5229 to 5269 (DVNECRQNVCRPDQHCKNTRGGYKCIDLCPSGMTKAENGTC). In terms of domain architecture, EGF-like 5; calcium-binding spans 5271-5306 (DIDECKDGTHQCRYNQICENTRGSYRCACPRGYRSQ). Cystine bridges form between cysteine 5275-cysteine 5288, cysteine 5282-cysteine 5297, cysteine 5318-cysteine 5329, cysteine 5325-cysteine 5338, cysteine 5340-cysteine 5353, cysteine 5435-cysteine 5445, cysteine 5441-cysteine 5454, and cysteine 5456-cysteine 5469. One can recognise an EGF-like 6; calcium-binding domain in the interval 5314–5354 (DINECEQVPKPCAHQCSNSPGSFKCICLPGQQLLGDGKSCA). Residues 5431–5470 (DIDECQNRDTCQHECKNTIGSYQCVCPPGYRLMLNGKTCQ) enclose the EGF-like 7; calcium-binding domain.

In terms of tissue distribution, in the kidney, expressed in the glomerulus (at protein level). Expressed in whisker and hair follicles, eye, tongue, and splenic and lymph node conduits (at protein level). In the embryo, localizes to the cleavage furrow at the two-cell stage (at protein level). In neonatal skin, expressed throughout the dermis (at protein level). In adult skin, strongly concentrated at the dermal side of the basement membrane but not detectable in the deeper dermis. Shows tendon-specific localization at the myotendinous junction and is also detected in the perichondrium (at protein level). Expressed by chondrocytes residing in articular cartilage and the femoral growth plate of 52 week old mice (at protein level). Expressed in vascular endothelial cells in coronary arteries and sparsely in endocardial endothelium (at protein level). Expressed in skin, tongue, lung and eye. At 14.5 dpc, expressed in the vibrissae, dermis, forelimb, kidney, intestine, lung and iliac cartilage where expression is found mainly in mesenchymal cells.

The protein resides in the secreted. It is found in the extracellular space. Its subcellular location is the extracellular matrix. It localises to the basement membrane. The protein localises to the cytoplasm. The protein resides in the cell junction. It is found in the cleavage furrow. In terms of biological role, involved in transforming growth factor beta-mediated rearrangement of the podocyte cytoskeleton which includes reduction of F-actin fibers and broadening, flattening and elongation of podocytes. Plays a role in basement membrane organization. May promote cleavage furrow maturation during cytokinesis in preimplantation embryos. May play a role in the architecture of adhesive and flexible epithelial cell junctions. May play a role during myocardial remodeling by imparting an effect on cardiac fibroblast migration. The polypeptide is Hemicentin-1 (Mus musculus (Mouse)).